A 228-amino-acid polypeptide reads, in one-letter code: Ankyrin repeat domain-containing protein 46 (228 aa).

ANK repeat units lie at residues Q11–I40, R44–T74, Q77–I103, and Q107–G138. The helical transmembrane segment at V195–G215 threads the bilayer.

The protein localises to the membrane. This Rattus norvegicus (Rat) protein is Ankyrin repeat domain-containing protein 46 (Ankrd46).